The following is a 496-amino-acid chain: Glutamyl-tRNA(Gln) amidotransferase subunit A, mitochondrial (496 aa).

Catalysis depends on charge relay system residues K80 and S161. S185 serves as the catalytic Acyl-ester intermediate.

The protein belongs to the amidase family. GatA subfamily. In terms of assembly, subunit of the heterotrimeric GatCAB amidotransferase (AdT) complex, composed of A, B and C subunits.

Its subcellular location is the mitochondrion. The catalysed reaction is L-glutamyl-tRNA(Gln) + L-glutamine + ATP + H2O = L-glutaminyl-tRNA(Gln) + L-glutamate + ADP + phosphate + H(+). Functionally, allows the formation of correctly charged Gln-tRNA(Gln) through the transamidation of misacylated Glu-tRNA(Gln) in the mitochondria. The reaction takes place in the presence of glutamine and ATP through an activated gamma-phospho-Glu-tRNA(Gln). The sequence is that of Glutamyl-tRNA(Gln) amidotransferase subunit A, mitochondrial from Culex quinquefasciatus (Southern house mosquito).